The primary structure comprises 598 residues: Nuclear receptor subfamily 4 group A member 2 (598 aa).

The interval 1–22 is disordered; sequence MPCVQAQYGSSPQGASPASQSY. Residues 8 to 22 are compositionally biased toward low complexity; sequence YGSSPQGASPASQSY. The segment at residues 260 to 335 is a DNA-binding region (nuclear receptor); sequence EGLCAVCGDN…VGMVKEVVRT (76 aa). NR C4-type zinc fingers lie at residues 263–283 and 299–323; these read CAVC…CEGC and CLAN…FQKC. The short motif at 287 to 314 is the Bipartite nuclear localization signal (NLS1) element; that stretch reads FKRTVQKNAKYVCLANKNCPVDKRRRNR. Residues 337 to 361 form a disordered region; the sequence is SLKGRRGRLPSKPKSPQDPSPPSPP. The short motif at 338–350 is the Nuclear localization signal (NLS1) element; it reads LKGRRGRLPSKPK. Residues 352–361 are compositionally biased toward pro residues; sequence PQDPSPPSPP. The NR LBD domain occupies 360–595; that stretch reads PPVSLISALV…AIIDKLFLDT (236 aa). Residues 443-452 carry the nuclear export sequence (NES1) motif; that stretch reads FLELFVLRLA. Residues 568–577 carry the nuclear export sequence (NES2) motif; sequence QGLQRIFYLK.

It belongs to the nuclear hormone receptor family. NR4 subfamily. Interacts with SFPQ, NCOR2, SIN3A and HADC1. The interaction with NCOR2 increases in the absence of PITX3. Interacts with PER2. Shows a ubiquitous distribution in the cerebral cortex, hippocampus, thalamus, amygdala, and midbrain. Expression increases in prenatally stressed adult offspring in the ventral tegmental area, whereas no changes are observed in the substantia nigra area (at protein level). Not expressed in quiescent liver but is rapidly induced following partial hepatectomy and is specific to hepatic growth as it is not induced in other mitogen-treated cells. Expressed at very low levels in the lung, spleen and stomach and at high levels in the brain.

The protein resides in the cytoplasm. It is found in the nucleus. In terms of biological role, transcriptional regulator which is important for the differentiation and maintenance of meso-diencephalic dopaminergic (mdDA) neurons during development. It is crucial for expression of a set of genes such as SLC6A3, SLC18A2, TH and DRD2 which are essential for development of mdDA neurons. May confer liver-specific regulation of delayed-early genes induced later in the G1 phase of regeneration along with NR4A1. This Rattus norvegicus (Rat) protein is Nuclear receptor subfamily 4 group A member 2 (Nr4a2).